The following is a 359-amino-acid chain: Type-1 angiotensin II receptor (359 aa).

The Extracellular segment spans residues 1–25 (MALNSSADDGIKRIQDDCPKAGRHS). Asparagine 4 carries an N-linked (GlcNAc...) asparagine glycan. Angiotensin II-binding residues include glutamine 15 and aspartate 17. Disulfide bonds link cysteine 18–cysteine 274 and cysteine 101–cysteine 180. The chain crosses the membrane as a helical span at residues 26–55 (YIFVMIPTLYSIIFVVGIFGNSLVVIVIYF). The Cytoplasmic segment spans residues 56–61 (YMKLKT). A helical transmembrane segment spans residues 62–89 (VASVFLLNLALADLCFLLTLPVWAVYTA). Over 90–98 (MEYRWPFGN) the chain is Extracellular. Residues 99–125 (HLCKIASAGISFNLYASVFLLTCLSID) form a helical membrane-spanning segment. Residues 126-141 (RYLAIVHPMKSRLRRT) are Cytoplasmic-facing. Residues 142–165 (MLVAKVTCVVIWLLAGLASLPAVI) form a helical membrane-spanning segment. Residues 166-190 (HRNVYFIENTNSTVCAFHYESQNST) lie on the Extracellular side of the membrane. An angiotensin II-binding site is contributed by arginine 167. Asparagine 176 carries an N-linked (GlcNAc...) asparagine glycan. Residues phenylalanine 182, histidine 183, and tyrosine 184 each contribute to the angiotensin II site. Asparagine 188 carries N-linked (GlcNAc...) asparagine glycosylation. The helical transmembrane segment at 191–216 (LPVGLGLTKNILGFMFPFLIILTSYT) threads the bilayer. Lysine 199 contacts angiotensin II. At 217–239 (LIWKALKKAYEIQKNKPRNDDIF) the chain is on the cytoplasmic side. The helical transmembrane segment at 240 to 268 (RIIMAIVLFFFFSWIPHQIFTFLDVLIQL) threads the bilayer. Residues 269–278 (GVIRDCKIAD) are Extracellular-facing. The helical transmembrane segment at 279 to 304 (VVDTAMPITICIAYFNNCLNPLFYGF) threads the bilayer. The Cytoplasmic portion of the chain corresponds to 305 to 359 (LGKKFKKYFLQLLKYIPPKAKSHSSLSTKMSTLSYRPSDNMNSSAKKPASCFEVE). The S-palmitoyl cysteine moiety is linked to residue cysteine 355.

This sequence belongs to the G-protein coupled receptor 1 family. As to quaternary structure, interacts with MAS1. Interacts with ARRB1. Interacts with FLNA (via filamin repeat 21); increases PKA-mediated phosphorylation of FLNA. In terms of processing, C-terminal Ser or Thr residues may be phosphorylated.

The protein localises to the cell membrane. Receptor for angiotensin II, a vasoconstricting peptide, which acts as a key regulator of blood pressure and sodium retention by the kidney. The activated receptor in turn couples to G-alpha proteins G(q) (GNAQ, GNA11, GNA14 or GNA15) and thus activates phospholipase C and increases the cytosolic Ca(2+) concentrations, which in turn triggers cellular responses such as stimulation of protein kinase C. The chain is Type-1 angiotensin II receptor (AGTR1) from Meriones unguiculatus (Mongolian jird).